The sequence spans 106 residues: Putative double-stranded DNA mimic protein VCM66_1163 (106 aa).

The protein belongs to the putative dsDNA mimic protein family.

May act as a double-stranded DNA (dsDNA) mimic. Probably regulates the activity of a dsDNA-binding protein. This is Putative double-stranded DNA mimic protein VCM66_1163 from Vibrio cholerae serotype O1 (strain M66-2).